We begin with the raw amino-acid sequence, 238 residues long: Large ribosomal subunit protein uL1 (238 aa).

This sequence belongs to the universal ribosomal protein uL1 family. In terms of assembly, part of the 50S ribosomal subunit.

Its function is as follows. Binds directly to 23S rRNA. The L1 stalk is quite mobile in the ribosome, and is involved in E site tRNA release. In terms of biological role, protein L1 is also a translational repressor protein, it controls the translation of the L11 operon by binding to its mRNA. In Saccharopolyspora erythraea (strain ATCC 11635 / DSM 40517 / JCM 4748 / NBRC 13426 / NCIMB 8594 / NRRL 2338), this protein is Large ribosomal subunit protein uL1.